We begin with the raw amino-acid sequence, 105 residues long: DNA-binding transcriptional regulator BolA (105 aa).

Belongs to the BolA/IbaG family.

Its function is as follows. Transcriptional regulator that plays an important role in general stress response. Has many effects on cell morphology, cell growth and cell division. Acts by regulating the transcription of many genes, including dacA (PBP-5), dacC (PBP-6), ampC and mreB. Probably involved in the coordination of genes that adapt the cell physiology in order to enhance cell adaptation and survival under stress conditions. Essential for normal cell morphology in stationary phase and under conditions of starvation. Also regulates a complex network of genes encoding proteins related to biofilm development, and negatively modulates flagellar biosynthesis and swimming capacity. Could be a motile/adhesive transcriptional switch, specifically involved in the transition between the planktonic and the attachment stage of biofilm formation. Overexpression produces round cell shape, impairs cell growth rate and induces biofilm development. This Escherichia coli (strain K12) protein is DNA-binding transcriptional regulator BolA.